A 332-amino-acid polypeptide reads, in one-letter code: Ketol-acid reductoisomerase (NADP(+)) (332 aa).

One can recognise a KARI N-terminal Rossmann domain in the interval 1 to 182 (MAQVWKDAEI…GSARAGLIKT (182 aa)). NADP(+)-binding positions include 25 to 28 (YGIQ), lysine 48, serine 53, and 83 to 86 (DMIQ). Histidine 108 is a catalytic residue. Glycine 134 serves as a coordination point for NADP(+). In terms of domain architecture, KARI C-terminal knotted spans 183–329 (TFKEEVETDW…RKMRKMMWPD (147 aa)). 4 residues coordinate Mg(2+): aspartate 191, glutamate 195, glutamate 227, and glutamate 231. Serine 252 serves as a coordination point for substrate.

Belongs to the ketol-acid reductoisomerase family. Requires Mg(2+) as cofactor.

The catalysed reaction is (2R)-2,3-dihydroxy-3-methylbutanoate + NADP(+) = (2S)-2-acetolactate + NADPH + H(+). It carries out the reaction (2R,3R)-2,3-dihydroxy-3-methylpentanoate + NADP(+) = (S)-2-ethyl-2-hydroxy-3-oxobutanoate + NADPH + H(+). It participates in amino-acid biosynthesis; L-isoleucine biosynthesis; L-isoleucine from 2-oxobutanoate: step 2/4. It functions in the pathway amino-acid biosynthesis; L-valine biosynthesis; L-valine from pyruvate: step 2/4. In terms of biological role, involved in the biosynthesis of branched-chain amino acids (BCAA). Catalyzes an alkyl-migration followed by a ketol-acid reduction of (S)-2-acetolactate (S2AL) to yield (R)-2,3-dihydroxy-isovalerate. In the isomerase reaction, S2AL is rearranged via a Mg-dependent methyl migration to produce 3-hydroxy-3-methyl-2-ketobutyrate (HMKB). In the reductase reaction, this 2-ketoacid undergoes a metal-dependent reduction by NADPH to yield (R)-2,3-dihydroxy-isovalerate. This chain is Ketol-acid reductoisomerase (NADP(+)), found in Cenarchaeum symbiosum (strain A).